A 354-amino-acid polypeptide reads, in one-letter code: Nucleoporin seh1 (354 aa).

WD repeat units lie at residues 10–49 (DHKDVIHDVVFDYYGRRMATCSSDQTVKIWDEDGQGKWNV), 55–96 (AHSG…KVSS), 112–153 (DSRT…NLSQ), 161–209 (SNKL…RKCV), 216–259 (DITD…TDIS), and 270–309 (EHNCPVWRVCWNMLATMLISTGDDGCVRLWRMNYNRQWRC).

It belongs to the WD repeat SEC13 family. Probable component of the nuclear pore complex (NPC). Component of the GATOR complex consisting of mio, Nup44A/Seh1, Im11, Nplr3, Nplr2, Wdr24, Wdr59 and Sec13. Within the GATOR complex, probable component of the GATOR2 subcomplex which is likely composed of mio, Nup44A/Seh1, Wdr24, Wdr59 and Sec13. Interacts with mio. Interacts with Wdr24. The GATOR2 complex associates with unmet in the absence of S-adenosyl-L-methionine; the mio-Wdr24-Nup44A subcomplex is essential and sufficient for this interaction while Wdr59 and Sec13 are dispensable. This association acts as a nutrient sensor to inhibit mTORC1 signaling in the absence of methionine. In terms of tissue distribution, expressed in ovarian cysts.

The protein resides in the nucleus envelope. It is found in the lysosome. In terms of biological role, probable component of the nuclear pore complex (NPC). Involved in maintaining the localization of another nucleoporin Mgtor to the nuclear envelope of early meiotic female germline cells. It is not involved in recruiting the nucleoporins Mgtor, Nup107, Nup153 and FG-containing nucleoporins to the NPC. Its function is as follows. An essential component of the GATOR subcomplex GATOR2 which functions as an activator of the amino acid-sensing branch of the mTORC1 signaling pathway. The two GATOR subcomplexes, GATOR1 and GATOR2, regulate the mTORC1 pathway in order to mediate metabolic homeostasis, female gametogenesis and the response to amino acid limitation and complete starvation. GATOR2 activates the mTORC1 signaling pathway through the inhibition of the GATOR1 subcomplex, controlling the switch to cell proliferation growth under nutrient replete conditions and growth during female oocyte development. This component is required for activating mTORC1 specifically in germline cells to promote cell growth and maintain the oocyte fate, probably influences the organization and/or function of microtubules within ovarian cysts, and promotes accumulation of another GATOR2 complex member mio in germline and somatic tissues. GATOR1 and GATOR2 act at different stages of oogenesis to regulate mTORC1 in order to control meiotic entry and promote oocyte growth and development. After exactly four mitotic cyst divisions, the GATOR1 complex members (Iml1, Nprl2 and Nprl3) down-regulate mTORC1 to slow cellular metabolism and promote the mitotic/meiotic transition. At later stages of oogenesis, the mio and Nup44A components of the GATOR2 complex inhibit GATOR1 and thus activate mTORC1 to promote meiotic progression, and drive oocyte growth and development. In addition to its role in the regulation of the mTORC1 complex, functions independently of mTORC1 to prevent the inappropriate accumulation of autolysosomes in germline tissues. In Drosophila melanogaster (Fruit fly), this protein is Nucleoporin seh1.